A 107-amino-acid polypeptide reads, in one-letter code: Replication restart protein PriB (107 aa).

The region spanning 8–107 (IENRLSLIGV…LHAEHIELLD (100 aa)) is the SSB domain.

The protein belongs to the PriB family. Homodimer. Interacts with PriA and DnaT. Component of the replication restart primosome. Primosome assembly occurs via a 'hand-off' mechanism. PriA binds to replication forks, subsequently PriB then DnaT bind; DnaT then displaces ssDNA to generate the helicase loading substrate.

Involved in the restart of stalled replication forks, which reloads the replicative helicase on sites other than the origin of replication; the PriA-PriB pathway is the major replication restart pathway. During primosome assembly it facilitates complex formation between PriA and DnaT on DNA; stabilizes PriA on DNA. Stimulates the DNA unwinding activity of PriA helicase. This Actinobacillus succinogenes (strain ATCC 55618 / DSM 22257 / CCUG 43843 / 130Z) protein is Replication restart protein PriB.